Reading from the N-terminus, the 377-residue chain is tRNA-specific 2-thiouridylase MnmA (377 aa).

ATP-binding positions include 12–19 (GMSGGVDS) and Met-38. Residues 98 to 100 (NPD) are interaction with target base in tRNA. Catalysis depends on Cys-103, which acts as the Nucleophile. Cys-103 and Cys-200 are disulfide-bonded. An ATP-binding site is contributed by Gly-127. The interval 150–152 (KDQ) is interaction with tRNA. Cys-200 (cysteine persulfide intermediate) is an active-site residue. An interaction with tRNA region spans residues 314–315 (RY).

The protein belongs to the MnmA/TRMU family.

Its subcellular location is the cytoplasm. It catalyses the reaction S-sulfanyl-L-cysteinyl-[protein] + uridine(34) in tRNA + AH2 + ATP = 2-thiouridine(34) in tRNA + L-cysteinyl-[protein] + A + AMP + diphosphate + H(+). In terms of biological role, catalyzes the 2-thiolation of uridine at the wobble position (U34) of tRNA, leading to the formation of s(2)U34. The chain is tRNA-specific 2-thiouridylase MnmA from Limosilactobacillus reuteri (strain DSM 20016) (Lactobacillus reuteri).